We begin with the raw amino-acid sequence, 214 residues long: Phosphatidylcholine transfer protein (214 aa).

Residue Met1 is modified to N-acetylmethionine. Positions 1-212 (MELAAGSFSE…MARACQNYLK (212 aa)) constitute an START domain. Tyr72 and Arg78 together coordinate a 1,2-diacyl-sn-glycero-3-phosphocholine. Ser139 carries the post-translational modification Phosphoserine. An a 1,2-diacyl-sn-glycero-3-phosphocholine-binding site is contributed by Gln157.

Interacts with ACOT13/THEM2. As to expression, highest expression in liver, placenta, testis, kidney and heart. Low levels in brain and lung. No expression detected in thymus.

It localises to the cytoplasm. In terms of biological role, catalyzes the transfer of phosphatidylcholine between membranes. Binds a single lipid molecule. The polypeptide is Phosphatidylcholine transfer protein (PCTP) (Homo sapiens (Human)).